The sequence spans 323 residues: MQTTWQPTASMEQLRQRAALITAIRQFFAERQVMEVDTPAMSHATVTDIHLHTFQTEFVGPGYADGSKLFFMTSPEFHMKRLLAAGSGCIYQINKAFRNEENGRHHNPEFTMLEWYRIGFDHHKLMDEMDDLLQLVLKCGAAERMTYQQAFIDVLGVCPLEGSMQELKVVAAKLGLSDIAEPEEDRDTLLQLLSSIGVEAKIGQQVPAFVYDFPASQAALAKINPQDIRVADRFEVYFKGIELANGFHELDNPKEQLARFEQDNAKRLDMGLKPQPIDYHLIGALEAGLPDCAGVALGVDRLIMLALGCDHIDQVTAFPFPIA.

74-76 (SPE) is a binding site for substrate. Residues 98–100 (RNE) and Asn-107 contribute to the ATP site. Tyr-116 serves as a coordination point for substrate. Residue 242-243 (EL) coordinates ATP. Glu-249 is a substrate binding site. Gly-298 contacts ATP.

This sequence belongs to the class-II aminoacyl-tRNA synthetase family. EpmA subfamily. As to quaternary structure, homodimer.

It catalyses the reaction D-beta-lysine + L-lysyl-[protein] + ATP = N(6)-((3R)-3,6-diaminohexanoyl)-L-lysyl-[protein] + AMP + diphosphate + H(+). In terms of biological role, with EpmB is involved in the beta-lysylation step of the post-translational modification of translation elongation factor P (EF-P). Catalyzes the ATP-dependent activation of (R)-beta-lysine produced by EpmB, forming a lysyl-adenylate, from which the beta-lysyl moiety is then transferred to the epsilon-amino group of a conserved specific lysine residue in EF-P. This Vibrio campbellii (strain ATCC BAA-1116) protein is Elongation factor P--(R)-beta-lysine ligase.